The sequence spans 184 residues: Probable RNA 2'-phosphotransferase (184 aa).

This sequence belongs to the KptA/TPT1 family.

In terms of biological role, removes the 2'-phosphate from RNA via an intermediate in which the phosphate is ADP-ribosylated by NAD followed by a presumed transesterification to release the RNA and generate ADP-ribose 1''-2''-cyclic phosphate (APPR&gt;P). May function as an ADP-ribosylase. The chain is Probable RNA 2'-phosphotransferase from Burkholderia pseudomallei (strain K96243).